The primary structure comprises 310 residues: MEIPHIPVLLNEVQEIFKNLKTGYFLDCTLGFGGHSETLLKNHPGLKFIACDQDQQALEFSKKRLKDFHNRITFIQSNFSEVLEKISHKEELRGILADIGVSSFQLDNNERGFSVNSDFLDMRMNQNSKISAYEVVNAYTKEQLTSIFKDYGELHDAHFIAEKICLERSKNLIKSAKELYQIIGKGKQNHRKISKATLAFQAIRIEVNQELKVLKDFLGYLENLKPKNCILAIISFHSLEDRIVKNFFKKWSKNCICDEKIMRCKCGNNHSLGQIITKKSISASKEELLKNSRSSCAKMRAFYFNNLDNK.

Residues G33–H35, D52, F79, D98, and Q105 contribute to the S-adenosyl-L-methionine site.

It belongs to the methyltransferase superfamily. RsmH family.

The protein resides in the cytoplasm. It carries out the reaction cytidine(1402) in 16S rRNA + S-adenosyl-L-methionine = N(4)-methylcytidine(1402) in 16S rRNA + S-adenosyl-L-homocysteine + H(+). In terms of biological role, specifically methylates the N4 position of cytidine in position 1402 (C1402) of 16S rRNA. The protein is Ribosomal RNA small subunit methyltransferase H of Campylobacter jejuni subsp. doylei (strain ATCC BAA-1458 / RM4099 / 269.97).